The chain runs to 59 residues: uncharacterized protein (59 aa).

The next 2 helical transmembrane spans lie at 1 to 21 and 30 to 50; these read MNMY…YIFI and GSWI…PYFY.

It localises to the cell membrane. This is an uncharacterized protein from Bacillus subtilis (strain 168).